The following is a 443-amino-acid chain: Threonine/serine transporter TdcC (443 aa).

Transmembrane regions (helical) follow at residues 22–42 (TTWT…FFPI), 44–64 (AGFG…PIAF), 97–117 (GVVI…IYGV), 135–155 (ALNR…IIWF), 163–183 (VMSF…LSLI), 207–227 (ILVT…FSPI), 259–279 (ASIL…FALS), 319–339 (ASII…LGTL), 366–386 (LSMV…PNIL), 389–409 (IEAM…MYAI), and 422–442 (IDNV…VYKV).

It belongs to the amino acid/polyamine transporter 2 family. SdaC/TdcC subfamily.

It is found in the cell inner membrane. It catalyses the reaction L-threonine(in) + H(+)(in) = L-threonine(out) + H(+)(out). The enzyme catalyses L-serine(in) + H(+)(in) = L-serine(out) + H(+)(out). Involved in the import of threonine and serine into the cell, with the concomitant import of a proton (symport system). In Escherichia fergusonii (strain ATCC 35469 / DSM 13698 / CCUG 18766 / IAM 14443 / JCM 21226 / LMG 7866 / NBRC 102419 / NCTC 12128 / CDC 0568-73), this protein is Threonine/serine transporter TdcC.